Consider the following 1085-residue polypeptide: SLIT-ROBO Rho GTPase-activating protein 1 (1085 aa).

An F-BAR domain is found at 19-314; the sequence is SQVKEIRAQL…AVDNLEPRSD (296 aa). Positions 351 to 390 form a coiled coil; the sequence is VQAELMLRYQQLQSRLATLKIENEEVKKTTEATLQTIQDM. S416 carries the phosphoserine modification. The disordered stretch occupies residues 475–496; it reads YMTTRPPNVPPKPQKHRKSRPR. The Rho-GAP domain occupies 506 to 694; the sequence is GDLETFVKDS…TIIIHHETIF (189 aa). An SH3 domain is found at 743-802; it reads CEPIEAIAKFDYVGRSARELSFKKGASLLLYHRASEDWWEGRHNGIDGLVPHQYIVVQDM. Polar residues predominate over residues 808-822; it reads DTLSQKADSEASSGP. The interval 808–954 is disordered; it reads DTLSQKADSE…TGFNDHKPLD (147 aa). Residues S835 and S917 each carry the phosphoserine modification. A compositionally biased stretch (basic and acidic residues) spans 922–931; it reads SRHDSLKKID. A Phosphoserine modification is found at S932. Residues 937–946 are compositionally biased toward polar residues; that stretch reads RSTSSGQYTG. The stretch at 956–985 forms a coiled coil; that stretch reads ETIAQDIEETMNTALNELRELERQSTAKHA. Residues 997 to 1011 are compositionally biased toward polar residues; it reads KNSPTPATSTESLSP. Disordered regions lie at residues 997 to 1038 and 1051 to 1085; these read KNSP…MSTF and KPPA…SCTM. Residue S999 is modified to Phosphoserine. T1001 is subject to Phosphothreonine. A compositionally biased stretch (low complexity) spans 1027 to 1037; sequence STSSSSDTMST. A Phosphoserine modification is found at S1032.

As to quaternary structure, homodimer. Forms a heterooligomer with SRGAP2 and SRGAP3 through its F-BAR domain. Interacts with ROBO1, CDC42 and RHOA. Interacts with FASLG. In terms of tissue distribution, expressed in brain, lung, kidney, and testis.

GTPase-activating protein for RhoA and Cdc42 small GTPases. Together with CDC42 seems to be involved in the pathway mediating the repulsive signaling of Robo and Slit proteins in neuronal migration. SLIT2, probably through interaction with ROBO1, increases the interaction of SRGAP1 with ROBO1 and inactivates CDC42. The polypeptide is SLIT-ROBO Rho GTPase-activating protein 1 (SRGAP1) (Homo sapiens (Human)).